Reading from the N-terminus, the 396-residue chain is DNA excision repair protein ERCC-8 (396 aa).

7 WD repeats span residues 33–73, 88–129, 133–173, 177–216, 235–274, 281–321, and 325–363; these read NKDR…LYDL, CSIG…VWDT, QTAD…LCDL, SCSH…LWDV, QAVE…LWNS, LVNY…VYTV, and EQIT…AWVP. Positions 371–396 are disordered; sequence DDDETTTKSQLNPAFEDAWSSSDEEG. Serine 390, serine 391, and serine 392 each carry phosphoserine.

As to quaternary structure, part of the CSA complex (also named DCX(ERCC8) complex), a DCX E3 ubiquitin-protein ligase complex containing ERCC8, RBX1, DDB1 and CUL4A; the CSA complex interacts with RNA polymerase II; upon UV irradiation it interacts with the COP9 signalosome and preferentially with the hyperphosphorylated form of RNA polymerase II. Interacts with ERCC6/CSB (via CIM motif); promoting recruitment to lesion-stalled RNA polymerase II (Pol II). Interacts with KIAA1530/UVSSA. Interacts with a subunit of RNA polymerase II TFIIH.

It localises to the nucleus. The protein localises to the chromosome. It is found in the nucleus matrix. It participates in protein modification; protein ubiquitination. Functionally, substrate-recognition component of the CSA complex, a DCX (DDB1-CUL4-X-box) E3 ubiquitin-protein ligase complex, involved in transcription-coupled nucleotide excision repair (TC-NER), a process during which RNA polymerase II-blocking lesions are rapidly removed from the transcribed strand of active genes. Following recruitment to lesion-stalled RNA polymerase II (Pol II), the CSA complex mediates ubiquitination of Pol II subunit POLR2A/RPB1 at 'Lys-1268', a critical TC-NER checkpoint, governing RNA Pol II stability and initiating DNA damage excision by TFIIH recruitment. The CSA complex also promotes the ubiquitination and subsequent proteasomal degradation of ERCC6/CSB in a UV-dependent manner; ERCC6 degradation is essential for the recovery of RNA synthesis after transcription-coupled repair. Also plays a role in DNA double-strand breaks (DSSBs) repair by non-homologous end joining (NHEJ). This chain is DNA excision repair protein ERCC-8, found in Homo sapiens (Human).